A 170-amino-acid chain; its full sequence is Lipoprotein signal peptidase (170 aa).

The next 4 helical transmembrane spans lie at 11–31 (LGWL…KAHF), 41–61 (IVVI…AAFS), 69–89 (WQRW…VVWL), and 95–115 (DDTW…GNLY). Active-site residues include aspartate 125 and aspartate 144. The chain crosses the membrane as a helical span at residues 136-156 (YFPAFNFADSAITVGAIMLAL).

It belongs to the peptidase A8 family.

The protein localises to the cell inner membrane. It catalyses the reaction Release of signal peptides from bacterial membrane prolipoproteins. Hydrolyzes -Xaa-Yaa-Zaa-|-(S,diacylglyceryl)Cys-, in which Xaa is hydrophobic (preferably Leu), and Yaa (Ala or Ser) and Zaa (Gly or Ala) have small, neutral side chains.. It participates in protein modification; lipoprotein biosynthesis (signal peptide cleavage). In terms of biological role, this protein specifically catalyzes the removal of signal peptides from prolipoproteins. In Pseudomonas fluorescens, this protein is Lipoprotein signal peptidase.